Consider the following 287-residue polypeptide: Bifunctional protein FolD (287 aa).

Residues 165 to 167 (NRS), Ser-190, and Ile-233 contribute to the NADP(+) site.

The protein belongs to the tetrahydrofolate dehydrogenase/cyclohydrolase family. In terms of assembly, homodimer.

The enzyme catalyses (6R)-5,10-methylene-5,6,7,8-tetrahydrofolate + NADP(+) = (6R)-5,10-methenyltetrahydrofolate + NADPH. It carries out the reaction (6R)-5,10-methenyltetrahydrofolate + H2O = (6R)-10-formyltetrahydrofolate + H(+). Its pathway is one-carbon metabolism; tetrahydrofolate interconversion. Functionally, catalyzes the oxidation of 5,10-methylenetetrahydrofolate to 5,10-methenyltetrahydrofolate and then the hydrolysis of 5,10-methenyltetrahydrofolate to 10-formyltetrahydrofolate. The chain is Bifunctional protein FolD from Nitrosopumilus maritimus (strain SCM1).